Consider the following 455-residue polypeptide: Phosphoglucosamine mutase (455 aa).

Residue serine 102 is the Phosphoserine intermediate of the active site. Serine 102, aspartate 241, aspartate 243, and aspartate 245 together coordinate Mg(2+). A Phosphoserine modification is found at serine 102.

The protein belongs to the phosphohexose mutase family. Mg(2+) is required as a cofactor. Post-translationally, activated by phosphorylation.

It catalyses the reaction alpha-D-glucosamine 1-phosphate = D-glucosamine 6-phosphate. Functionally, catalyzes the conversion of glucosamine-6-phosphate to glucosamine-1-phosphate. The chain is Phosphoglucosamine mutase from Legionella pneumophila (strain Corby).